Reading from the N-terminus, the 220-residue chain is 7-carboxy-7-deazaguanine synthase (220 aa).

Substrate-binding positions include 16–18 (IQG) and R31. In terms of domain architecture, Radical SAM core spans 22–215 (FAGWPCAFVR…LQLHKYIWNP (194 aa)). Residues C35, C39, and C42 each contribute to the [4Fe-4S] cluster site. T44 lines the Mg(2+) pocket. Residue T74 coordinates substrate. Position 76 (G76) interacts with S-adenosyl-L-methionine.

The protein belongs to the radical SAM superfamily. 7-carboxy-7-deazaguanine synthase family. In terms of assembly, homodimer. It depends on [4Fe-4S] cluster as a cofactor. S-adenosyl-L-methionine serves as cofactor. The cofactor is Mg(2+).

It carries out the reaction 6-carboxy-5,6,7,8-tetrahydropterin + H(+) = 7-carboxy-7-deazaguanine + NH4(+). Its pathway is purine metabolism; 7-cyano-7-deazaguanine biosynthesis. Catalyzes the complex heterocyclic radical-mediated conversion of 6-carboxy-5,6,7,8-tetrahydropterin (CPH4) to 7-carboxy-7-deazaguanine (CDG), a step common to the biosynthetic pathways of all 7-deazapurine-containing compounds. The chain is 7-carboxy-7-deazaguanine synthase from Chlorobaculum tepidum (strain ATCC 49652 / DSM 12025 / NBRC 103806 / TLS) (Chlorobium tepidum).